A 3582-amino-acid chain; its full sequence is Ubiquitin carboxyl-terminal hydrolase 34 (3582 aa).

Residues S352, S486, S487, and S490 each carry the phosphoserine modification. 5 disordered regions span residues 503-533 (EEEE…HQSG), 551-670 (QQRL…ELRN), 682-705 (GESQ…VFNT), 775-801 (HHHH…DGHM), and 1496-1515 (TGSY…DQVE). A compositionally biased stretch (low complexity) spans 510–524 (AAPSPWSPAASPQSS). The segment covering 560–570 (SMQGSSDETAN) has biased composition (polar residues). Over residues 571–590 (SGEDGSSGPGSSSGHSDGSS) the composition is skewed to low complexity. The span at 591 to 609 (NEVNSSHASQSAGSPGSEV) shows a compositional bias: polar residues. Residues 610-653 (QSEDIADIEALKEEEEEEEEEEEEEEEEDDEEEEDEEEDDDDDD) show a composition bias toward acidic residues. Residues 684–697 (SQGTSERNGTNSGT) show a composition bias toward polar residues. Over residues 775-798 (HHHHHHHHHHHHHHHHHHHHHHHD) the composition is skewed to basic residues. Positions 1504-1514 (PDSDDSSEDQV) are enriched in acidic residues. S1506 carries the post-translational modification Phosphoserine. The USP domain maps to 1931-2276 (VGLTNLGATC…SAYMLFYKRM (346 aa)). The active-site Nucleophile is C1940. The active-site Proton acceptor is H2201. Residue S2525 is modified to Phosphoserine. A disordered region spans residues 3369–3484 (SLQEQEAKER…QSNNGRFDDC (116 aa)). Residues 3373–3384 (QEAKERKTKDDE) show a composition bias toward basic and acidic residues. S3395 and S3396 each carry phosphoserine. T3418 carries the post-translational modification Phosphothreonine. 2 positions are modified to phosphoserine: S3423 and S3443. The span at 3463-3484 (DGSHIRSQHAEEQSNNGRFDDC) shows a compositional bias: basic and acidic residues. S3539 bears the Phosphoserine mark.

The protein belongs to the peptidase C19 family. As to quaternary structure, interacts with AXIN1 and AXIN2.

The enzyme catalyses Thiol-dependent hydrolysis of ester, thioester, amide, peptide and isopeptide bonds formed by the C-terminal Gly of ubiquitin (a 76-residue protein attached to proteins as an intracellular targeting signal).. Ubiquitin hydrolase that can remove conjugated ubiquitin from AXIN1 and AXIN2, thereby acting as a regulator of Wnt signaling pathway. Acts as an activator of the Wnt signaling pathway downstream of the beta-catenin destruction complex by deubiquitinating and stabilizing AXIN1 and AXIN2, leading to promote nuclear accumulation of AXIN1 and AXIN2 and positively regulate beta-catenin (CTNBB1)-mediated transcription. Recognizes and hydrolyzes the peptide bond at the C-terminal Gly of ubiquitin. Involved in the processing of poly-ubiquitin precursors as well as that of ubiquitinated proteins. This chain is Ubiquitin carboxyl-terminal hydrolase 34 (Usp34), found in Mus musculus (Mouse).